We begin with the raw amino-acid sequence, 897 residues long: MQDKYTPAEVERAAHSHWTARDAYRVTEDAGKKKFYACSMLPYPSGKLHMGHVRNYTINDMLTRYLRMNGHNVLMPMGWDAFGLPAENAALKNGVPPAQWTYDNIAYMKKQMQAMGLAIDWSREVATCDPDYYKWNQWLFLKMLEKGIAYRKTQVVNWDPVDQTVLANEQVIDGRGWRTGALVEKREIPGYYLKITDYAQELLDHVQVGNPNATLTGWPDKVRLMQENWIGKSEGVRFAFTHDIRGEDGQPIGDGRMYVFTTRADTIMGVTFCAVAPEHPLAAHAARSNPDVAAFIQECKTGGTTEAELATQEKKGVRTGLTVTHPLTDEPIEVWVGNYVLMGYGDGAVMGVPAHDERDFAFALKYGIEIKQVVLVDGETFDYHRWQDWYGDKQNGVTINSDNFSGLSYQEAVSAVAHALQEKGLGEKKTTWRLRDWGVSRQRYWGTPIPIIHCDEHGAVPVPEKDLPVVLPQDCIPDGSGNPLHKHEGFHAGVKCPVCGKAARRETDTMDTFVDSSWYFMRYCDPKNADAMVAGGADYWMPMDQYIGGIEHAILHLLYARFWTKVMRDLGLVKVDEPFTKLLTQGMVLNHIYSRRTDKGGKEYFWPHDVEHIQDEAGKITGARLKNAVGDLPAGTPIDYEGVGTMSKSKNNGVDPQELIEKYGADTARLYTMFTAPPEATLEWNDAAVEGSYRFLRRVWNFGVKLAGIDAAATEAAIQGAQSLQDVQFGKEAKALRLEIHTVLKQVDYDYQRMQYNTVVSGAMKMLNALEDFKSADAPGGLVALIEGFGILLRVLYPATPHIAHGLWSGLGYAGSLGDLLDAPWPQVDAGALMQDEIELVLQINGKLRGAIRVPSGADKAEIERIALASEDFHKHAAGAAPKKVVVVPGRLVNVVV.

A 'HIGH' region motif is present at residues 42 to 52; sequence PYPSGKLHMGH. A 'KMSKS' region motif is present at residues 645-649; sequence TMSKS. Lys-648 contacts ATP.

Belongs to the class-I aminoacyl-tRNA synthetase family.

The protein resides in the cytoplasm. It carries out the reaction tRNA(Leu) + L-leucine + ATP = L-leucyl-tRNA(Leu) + AMP + diphosphate. The chain is Leucine--tRNA ligase from Paracidovorax citrulli (strain AAC00-1) (Acidovorax citrulli).